Consider the following 71-residue polypeptide: Large ribosomal subunit protein bL31 (71 aa).

Positions 16, 18, 37, and 40 each coordinate Zn(2+).

This sequence belongs to the bacterial ribosomal protein bL31 family. Type A subfamily. In terms of assembly, part of the 50S ribosomal subunit. Requires Zn(2+) as cofactor.

In terms of biological role, binds the 23S rRNA. The sequence is that of Large ribosomal subunit protein bL31 from Mannheimia succiniciproducens (strain KCTC 0769BP / MBEL55E).